Here is a 194-residue protein sequence, read N- to C-terminus: Protein GrpE (194 aa).

Positions 1–14 (MENTQENPTSQNPT) are enriched in polar residues. The tract at residues 1 to 50 (MENTQENPTSQNPTPADETARQAAEAAAPQQEAAANAATDSPVNAEQSAL) is disordered. The span at 21–38 (RQAAEAAAPQQEAAANAA) shows a compositional bias: low complexity.

The protein belongs to the GrpE family. As to quaternary structure, homodimer.

The protein resides in the cytoplasm. Participates actively in the response to hyperosmotic and heat shock by preventing the aggregation of stress-denatured proteins, in association with DnaK and GrpE. It is the nucleotide exchange factor for DnaK and may function as a thermosensor. Unfolded proteins bind initially to DnaJ; upon interaction with the DnaJ-bound protein, DnaK hydrolyzes its bound ATP, resulting in the formation of a stable complex. GrpE releases ADP from DnaK; ATP binding to DnaK triggers the release of the substrate protein, thus completing the reaction cycle. Several rounds of ATP-dependent interactions between DnaJ, DnaK and GrpE are required for fully efficient folding. The chain is Protein GrpE from Paraburkholderia phytofirmans (strain DSM 17436 / LMG 22146 / PsJN) (Burkholderia phytofirmans).